We begin with the raw amino-acid sequence, 510 residues long: MTEDKVTGTLVLAVFTAVLSSFQFGYDIGVINAPQQVIITHYRHVLGVSLDDRIAINNYALNSTEELPTSLGDPTPVSWAEEETMTSASLITMFWSLSVSSFAVGGMIASFFGGLLGDKLGRIKALLVANILSLVGALLMGFSKLGPSHILIISGRGISGLYCGLISGLIPMYIGEIAPTTLRGAIGALHQLAIVTGILISQIVGLDFILGNHELWHILLGLSAVPAILQCLLLFFCPESPRYLYIKLDEEAKAKKSLKRLRGSDDITKDITEMRKEREEASNEKKVSIIQLFTNASYRQPILVALMLHAAQQFSGINGIFYYSTSIFQTAGISQPVYATIGVGAVNTVFTAVSVFLVEKAGRRSLFLIGMSGMFVCAIFMSVGLVLLSKFPWMNYVSMTAIFLFVSFFEIGPGPIPWFMVAEFFSQGPRPAALAIAAFSNWTGNFIIALCFQYIADFCGPYVFFLLLVWSWPLFCSHFLKFQKPKENPLRKSQQSSERRGVQLKRQKLL.

Topologically, residues 1–10 are cytoplasmic; the sequence is MTEDKVTGTL. Residues 11–31 traverse the membrane as a helical segment; it reads VLAVFTAVLSSFQFGYDIGVI. At 32-96 the chain is on the extracellular side; sequence NAPQQVIITH…SASLITMFWS (65 aa). Asparagine 62 is a glycosylation site (N-linked (GlcNAc...) asparagine). Residues 97–117 form a helical membrane-spanning segment; it reads LSVSSFAVGGMIASFFGGLLG. Topologically, residues 118-122 are cytoplasmic; it reads DKLGR. A helical membrane pass occupies residues 123–143; that stretch reads IKALLVANILSLVGALLMGFS. Over 144–157 the chain is Extracellular; it reads KLGPSHILIISGRG. A helical membrane pass occupies residues 158 to 178; it reads ISGLYCGLISGLIPMYIGEIA. At 179 to 191 the chain is on the cytoplasmic side; that stretch reads PTTLRGAIGALHQ. D-glucose is bound at residue glutamine 191. The chain crosses the membrane as a helical span at residues 192-212; that stretch reads LAIVTGILISQIVGLDFILGN. Residues 213–215 are Extracellular-facing; that stretch reads HEL. Residues 216-236 traverse the membrane as a helical segment; sequence WHILLGLSAVPAILQCLLLFF. The Cytoplasmic segment spans residues 237–301; sequence CPESPRYLYI…LFTNASYRQP (65 aa). Residues 302–322 traverse the membrane as a helical segment; it reads ILVALMLHAAQQFSGINGIFY. D-glucose-binding positions include 312–313 and asparagine 318; that span reads QQ. At 323–336 the chain is on the extracellular side; that stretch reads YSTSIFQTAGISQP. The helical transmembrane segment at 337–357 threads the bilayer; sequence VYATIGVGAVNTVFTAVSVFL. Asparagine 347 is a binding site for D-glucose. The Cytoplasmic segment spans residues 358-365; sequence VEKAGRRS. Residues 366 to 386 traverse the membrane as a helical segment; that stretch reads LFLIGMSGMFVCAIFMSVGLV. The Extracellular portion of the chain corresponds to 387-400; that stretch reads LLSKFPWMNYVSMT. Residues 401–421 form a helical membrane-spanning segment; that stretch reads AIFLFVSFFEIGPGPIPWFMV. D-glucose is bound by residues glutamate 410 and tryptophan 418. At 422–431 the chain is on the cytoplasmic side; sequence AEFFSQGPRP. A helical transmembrane segment spans residues 432 to 452; the sequence is AALAIAAFSNWTGNFIIALCF. Residues 453 to 454 lie on the Extracellular side of the membrane; it reads QY. A helical transmembrane segment spans residues 455–475; it reads IADFCGPYVFFLLLVWSWPLF. Over 476 to 510 the chain is Cytoplasmic; that stretch reads CSHFLKFQKPKENPLRKSQQSSERRGVQLKRQKLL. Positions 490-510 are disordered; it reads LRKSQQSSERRGVQLKRQKLL.

Belongs to the major facilitator superfamily. Sugar transporter (TC 2.A.1.1) family. Glucose transporter subfamily. In terms of processing, N-glycosylated; required for stability and retention at the cell surface of pancreatic beta cells.

It localises to the cell membrane. The catalysed reaction is D-glucose(out) = D-glucose(in). It carries out the reaction D-fructose(out) = D-fructose(in). It catalyses the reaction L-dehydroascorbate(out) = L-dehydroascorbate(in). The enzyme catalyses D-galactose(in) = D-galactose(out). Its activity is regulated as follows. D-glucose and maltose competitively inhibit fructose transport. D-glucose, D-fructose and maltose inhibit deoxyglucose transport. In terms of biological role, facilitative hexose transporter that mediates the transport of glucose, fructose and galactose. Likely mediates the bidirectional transfer of glucose across the plasma membrane of hepatocytes and is responsible for uptake of glucose by the beta cells; may comprise part of the glucose-sensing mechanism of the beta cell. May also participate with the Na(+)/glucose cotransporter in the transcellular transport of glucose in the small intestine and kidney. Also able to mediate the transport of dehydroascorbate. The protein is Solute carrier family 2, facilitated glucose transporter member 2 of Bos taurus (Bovine).